The chain runs to 520 residues: Cell division control protein 3 (520 aa).

Basic and acidic residues predominate over residues 1-24 (MSLKEEQVSIKQDPEQEERQHDQF). The segment at 1 to 83 (MSLKEEQVSI…SSQSEKGQVL (83 aa)) is disordered. The residue at position 2 (Ser-2) is an N-acetylserine. Phosphoserine is present on Ser-2. A Glycyl lysine isopeptide (Lys-Gly) (interchain with G-Cter in SUMO) cross-link involves residue Lys-4. At Ser-9 the chain carries Phosphoserine. Residues Lys-11 and Lys-30 each participate in a glycyl lysine isopeptide (Lys-Gly) (interchain with G-Cter in SUMO) cross-link. Position 47 is a phosphothreonine (Thr-47). Residues 51–64 (DSERFEAAESDVKV) show a composition bias toward basic and acidic residues. The residue at position 60 (Ser-60) is a Phosphoserine. Lys-63 participates in a covalent cross-link: Glycyl lysine isopeptide (Lys-Gly) (interchain with G-Cter in SUMO). A Phosphoserine modification is found at Ser-77. The 296-residue stretch at 116–411 (NGFSFNLLCV…ENYRSSKLAK (296 aa)) folds into the Septin-type G domain. Positions 126 to 133 (GPDGIGKT) are G1 motif. 126–133 (GPDGIGKT) lines the GTP pocket. Residues 156 to 167 (ELANDQEEEEGQ) show a composition bias toward acidic residues. The segment at 156-181 (ELANDQEEEEGQGEGHENQSQEQRHK) is disordered. Basic and acidic residues predominate over residues 168–179 (GEGHENQSQEQR). Phosphoserine is present on Ser-175. The tract at residues 204–207 (DTEG) is G3 motif. GTP is bound by residues Gly-207, 287–295 (KSDILTDEE), Gly-344, and Arg-360. The interval 286–289 (AKSD) is G4 motif. A Glycyl lysine isopeptide (Lys-Gly) (interchain with G-Cter in SUMO) cross-link involves residue Lys-287. The stretch at 427–508 (ISKQQEEKTL…INSASPNVNH (82 aa)) forms a coiled coil. Residue Thr-468 is modified to Phosphothreonine. The tract at residues 496–520 (ELSINSASPNVNHSPVPTKKKGFLR) is disordered. A compositionally biased stretch (polar residues) spans 497–510 (LSINSASPNVNHSP). Ser-509 carries the phosphoserine modification.

This sequence belongs to the TRAFAC class TrmE-Era-EngA-EngB-Septin-like GTPase superfamily. Septin GTPase family. As to quaternary structure, component of the septin complex which consists of CDC3, CDC10, CDC11, CDC12 and probably SHS1 and rearranges to a cortical collar of highly ordered filaments at the mother-bud-neck. A complex formed by CDC3, CDC10, CDC11 and CDC12 is capable of forming long filaments in vitro and the components seem to be present in a 2:2:2:2 arrangement in vivo. The filaments are proposed to be formed by the end-to-end polymerization of CDC3-CDC12-CDC11 complexes with CDC10 serving as a bridge to bundle the polymers into paired filaments. Component of the GIN4 complex composed of at least BNI5, CDC3, CDC10, CDC11, CDC12, GIN4, NAP1 and SHS1. Self-associates. Interacts with SIZ1 and SYP1. Phosphorylated by CDC28. Phosphorylation at the end of G1 may facilitate initiation of a new cell cycle by promoting disassembly of the obsolete septin ring from the previous cell cycle. Post-translationally, sumoylated during mitosis on the mother cell side of the bud neck by UBC9/SIZ1. Sumoylation probably plays a central role in regulating septin ring disassembly during the cell cycle.

Its subcellular location is the membrane. It is found in the bud neck. Its function is as follows. Septins are GTPases involved in cytokinesis that assemble early in the cell cycle as a patch at the incipient bud site and form a ring approximate 15 minutes before bud emergence, which transforms into an hour-glass shaped collar of cortical filaments that spans both sides of the mother-bud neck. This collar persists until just before cytokinesis, when it splits into two rings that occupy opposite sides of the neck. The septins at the bud neck serve as a structural scaffold that recruits different components involved in diverse processes at specific stages during the cell cycle. Many proteins bind asymmetrically to the septin collar. The septin assembly is regulated by protein kinases GIN4 and/or CLA4. May act by recruiting MYO1 and HOF1, a protein involved in septation, to the site of cleavage. Septins are also involved in cell morphogenesis, bud site selection, chitin deposition, cell cycle regulation, cell compartmentalization and spore wall formation. The protein is Cell division control protein 3 (CDC3) of Saccharomyces cerevisiae (strain ATCC 204508 / S288c) (Baker's yeast).